We begin with the raw amino-acid sequence, 496 residues long: Squalene epoxidase ERG1 (496 aa).

A helical membrane pass occupies residues Val-4 to Phe-24. Residues Val-15 to Ile-16, Glu-35 to Arg-36, Arg-43, Arg-148, Val-164, Asp-332, and Met-345 each bind FAD. Helical transmembrane passes span Ile-431–Val-451 and Leu-466–Phe-486.

This sequence belongs to the squalene monooxygenase family. FAD serves as cofactor.

It is found in the microsome membrane. The protein localises to the endoplasmic reticulum membrane. The enzyme catalyses squalene + reduced [NADPH--hemoprotein reductase] + O2 = (S)-2,3-epoxysqualene + oxidized [NADPH--hemoprotein reductase] + H2O + H(+). Its pathway is terpene metabolism; lanosterol biosynthesis; lanosterol from farnesyl diphosphate: step 2/3. Activity is completely abolished by Triton X-100, deoxycholate or Cu(2+), and partially inhibited by thiol reagents, rotenone and antimycin A. The allylamine antimycotic agents naftifine and SF 86-327are potent inhibitors and show apparently non-competitive kinetics with respect to the substrate squalene. Functionally, squalene epoxidase; part of the third module of ergosterol biosynthesis pathway that includes the late steps of the pathway. Erg1 catalyzes the epoxidation of squalene into 2,3-epoxysqualene. The third module or late pathway involves the ergosterol synthesis itself through consecutive reactions that mainly occur in the endoplasmic reticulum (ER) membrane. Firstly, the squalene synthase ERG9 catalyzes the condensation of 2 farnesyl pyrophosphate moieties to form squalene, which is the precursor of all steroids. Squalene synthase is crucial for balancing the incorporation of farnesyl diphosphate (FPP) into sterol and nonsterol isoprene synthesis. Secondly, the squalene epoxidase ERG1 catalyzes the stereospecific oxidation of squalene to (S)-2,3-epoxysqualene, which is considered to be a rate-limiting enzyme in steroid biosynthesis. Then, the lanosterol synthase ERG7 catalyzes the cyclization of (S)-2,3 oxidosqualene to lanosterol, a reaction that forms the sterol core. In the next steps, lanosterol is transformed to zymosterol through a complex process involving various demethylation, reduction and desaturation reactions. The lanosterol 14-alpha-demethylase ERG11 (also known as CYP51) catalyzes C14-demethylation of lanosterol to produce 4,4'-dimethyl cholesta-8,14,24-triene-3-beta-ol, which is critical for ergosterol biosynthesis. The C-14 reductase ERG24 reduces the C14=C15 double bond of 4,4-dimethyl-cholesta-8,14,24-trienol to produce 4,4-dimethyl-cholesta-8,24-dienol. 4,4-dimethyl-cholesta-8,24-dienol is substrate of the C-4 demethylation complex ERG25-ERG26-ERG27 in which ERG25 catalyzes the three-step monooxygenation required for the demethylation of 4,4-dimethyl and 4alpha-methylsterols, ERG26 catalyzes the oxidative decarboxylation that results in a reduction of the 3-beta-hydroxy group at the C-3 carbon to an oxo group, and ERG27 is responsible for the reduction of the keto group on the C-3. ERG28 has a role as a scaffold to help anchor ERG25, ERG26 and ERG27 to the endoplasmic reticulum and ERG29 regulates the activity of the iron-containing C4-methylsterol oxidase ERG25. Then, the sterol 24-C-methyltransferase ERG6 catalyzes the methyl transfer from S-adenosyl-methionine to the C-24 of zymosterol to form fecosterol. The C-8 sterol isomerase ERG2 catalyzes the reaction which results in unsaturation at C-7 in the B ring of sterols and thus converts fecosterol to episterol. The sterol-C5-desaturase ERG3 then catalyzes the introduction of a C-5 double bond in the B ring to produce 5-dehydroepisterol. The C-22 sterol desaturase ERG5 further converts 5-dehydroepisterol into ergosta-5,7,22,24(28)-tetraen-3beta-ol by forming the C-22(23) double bond in the sterol side chain. Finally, ergosta-5,7,22,24(28)-tetraen-3beta-ol is substrate of the C-24(28) sterol reductase ERG4 to produce ergosterol. The protein is Squalene epoxidase ERG1 of Candida albicans (strain SC5314 / ATCC MYA-2876) (Yeast).